Reading from the N-terminus, the 325-residue chain is Serine/threonine-protein kinase CtkA (325 aa).

ATP-binding positions include 21 to 24, Lys37, Gln72, and 88 to 90; these read NGNK and KDF. Mg(2+) is bound by residues Asn160 and Asp179. Asp179 is a binding site for ATP. The segment at 296 to 325 is disordered; sequence QHKQAHSNPYDNADDLDNSNEYTPTPKRRR.

Autophosphorylates on either Thr-3 or Thr-7.

The protein resides in the secreted. It localises to the host cytoplasm. The protein localises to the host cytosol. It is found in the host nucleus. The enzyme catalyses L-seryl-[protein] + ATP = O-phospho-L-seryl-[protein] + ADP + H(+). It carries out the reaction L-threonyl-[protein] + ATP = O-phospho-L-threonyl-[protein] + ADP + H(+). In terms of biological role, virulence factor acting as a pro-inflammatory protein that induces the secretion of the pro-inflammatory cytokines TNF-alpha (tumor necrosis factor-alpha) and IL-8 (interleukin-8) from human macrophages, as well as enhanced translocation of the transcription factor NF-kappa-B complex in macrophages. Is a kinase capable of autophosphorylating itself at a threonine residue near the N-terminus. Also leads to enhanced phosphorylation of the NF-kappa-B p65 subunit (RELA) at 'Ser-276' in human epithelial cancer cells; its kinase activity is required for this enhanced phosphorylation that up-regulates NF-kappa-B activity, but it does not directly phosphorylate this protein. Thus, the kinase activity of CtkA may play an important role in the induction of host inflammatory responses during H.pylori infection. This chain is Serine/threonine-protein kinase CtkA (ctkA), found in Helicobacter pylori (strain J99 / ATCC 700824) (Campylobacter pylori J99).